We begin with the raw amino-acid sequence, 519 residues long: Cytochrome P450 monooxygenase FPY7 (519 aa).

The helical transmembrane segment at 12-34 (SLSLRWKIIVTLLAIYTLRIIGT) threads the bilayer. A heme-binding site is contributed by Cys465.

This sequence belongs to the cytochrome P450 family. Requires heme as cofactor.

The protein resides in the membrane. Its pathway is secondary metabolite biosynthesis. In terms of biological role, cytochrome P450 monooxygenase; part of the gene cluster that mediates the biosynthesis of the gamma-pyrones fusapyrone (FPY) and deoxyfusapyrone (dFPY). FPY is an undecaketide and thus likely synthesized by the polyketide synthase FPY1 from acetyl-CoA functioning as starter unit and the addition of 10 malonyl-CoA extender units by successive Claisen-condensations. Next to this, FPY shares some rare features: C-glycosylated 4-deoxyglucose at C-3, a gem-dimethyl group at C-13, and an alpha-beta to beta-gamma double bond shift at C-20. During FPY biosynthesis mono-C-methyl groups are transferred to the tetra-, penta-, hexa- and heptaketide, while two C-methyl groups are transferred to the nonaketide, suggesting that the CMet domain is programmed to selectively catalyze two successive C-alpha-methylation reactions of the nonaketide, while other alpha-carbons are non- or mono-methylated only. While the origin of the 4'-deoxyglucose moiety remains opaque, its transfer to C-3 is most likely mediated by the C-glycosyltransferase FPY2. Next to this, the hydroxyl group present at C-33 and discriminating between FPY and dFPY, is likely to be installed by the cytochrome P450 monooxygenase FPY7. No putative function can be predicted for the remaining genes FPY3-FPY6. This Fusarium mangiferae (Mango malformation disease fungus) protein is Cytochrome P450 monooxygenase FPY7.